Here is a 332-residue protein sequence, read N- to C-terminus: Tryptophan--tRNA ligase (332 aa).

ATP is bound by residues 13-15 (KPS) and 21-22 (GN). A 'HIGH' region motif is present at residues 14 to 22 (PSGDLTLGN). Asp137 serves as a coordination point for L-tryptophan. Residues 149 to 151 (GKD), Ile188, and 197 to 201 (KMSKS) each bind ATP. The 'KMSKS' region signature appears at 197-201 (KMSKS).

It belongs to the class-I aminoacyl-tRNA synthetase family. As to quaternary structure, homodimer.

The protein resides in the cytoplasm. The catalysed reaction is tRNA(Trp) + L-tryptophan + ATP = L-tryptophyl-tRNA(Trp) + AMP + diphosphate + H(+). Its function is as follows. Catalyzes the attachment of tryptophan to tRNA(Trp). The chain is Tryptophan--tRNA ligase from Clostridium perfringens (strain 13 / Type A).